A 428-amino-acid chain; its full sequence is MDLSGAPVPVALLRGHTHPVTSLRFYNAFLVSGDESGWVFWWSLVTRRPLAIWKAHHEAILSLVWMDETHLLTQGRDDKLYVWRLELDAQGKSGLSVKPPSSLVADDPTDYPKPWLTYSLTVNSLNFCQVAWVNGLLAKPDLDSSDKVELLEWTDGAFRVVWNDIYPRLNGIKTGIVMDLNIMNKKLIVGYEGGAVAVFDISDRNRYTPVLNYYVVSHVQPVLSVRAHPTKKEFVSSSADSLIVKHPIKDQVVPEEEMEEPEPAKNSERPPSPKIVEVEDSPELEPPKNVVRGFDVPGLELEEGIEVKEEEKPESKPLDAVNVRHSGLSSLQLDSDGDLIMTAGWDGKVRLFTYDDISKVSVFHEREGVGCVAFSTPTTSDTANPRLAKALTTRWIAVGGKDGKIELYTIQQGNEKTLGEGRSKYIRH.

7 WD repeats span residues 15–52 (GHTHPVTSLRFYNAFLVSGDESGWVFWWSLVTRRPLAI), 55–93 (AHHEAILSLVWMDETHLLTQGRDDKLYVWRLELDAQGKS), 122–163 (VNSL…VVWN), 171–209 (GIKTGIVMDLNIMNKKLIVGYEGGAVAVFDISDRNRYTP), 217–259 (SHVQ…EEME), 323–362 (VRHSGLSSLQLDSDGDLIMTAGWDGKVRLFTYDDISKVSV), and 364–418 (HERE…EKTL). A disordered region spans residues 250–295 (DQVVPEEEMEEPEPAKNSERPPSPKIVEVEDSPELEPPKNVVRGFD).

Belongs to the WD repeat ASA1 family. In terms of assembly, component of the ASTRA chromatin remodeling machinery complex.

The protein localises to the nucleus. Functionally, component of the ASTRA complex involved in chromatin remodeling. The chain is ASTRA-associated protein 1 (ASA1) from Yarrowia lipolytica (strain CLIB 122 / E 150) (Yeast).